Consider the following 627-residue polypeptide: 1-deoxy-D-xylulose-5-phosphate synthase (627 aa).

Residues His-80 and 121–123 (GHS) each bind thiamine diphosphate. Asp-152 serves as a coordination point for Mg(2+). Thiamine diphosphate contacts are provided by residues 153–154 (GA), Asn-181, Tyr-288, and Glu-370. Asn-181 is a binding site for Mg(2+).

It belongs to the transketolase family. DXPS subfamily. Homodimer. Mg(2+) is required as a cofactor. It depends on thiamine diphosphate as a cofactor.

The catalysed reaction is D-glyceraldehyde 3-phosphate + pyruvate + H(+) = 1-deoxy-D-xylulose 5-phosphate + CO2. It participates in metabolic intermediate biosynthesis; 1-deoxy-D-xylulose 5-phosphate biosynthesis; 1-deoxy-D-xylulose 5-phosphate from D-glyceraldehyde 3-phosphate and pyruvate: step 1/1. Catalyzes the acyloin condensation reaction between C atoms 2 and 3 of pyruvate and glyceraldehyde 3-phosphate to yield 1-deoxy-D-xylulose-5-phosphate (DXP). This Vibrio atlanticus (strain LGP32) (Vibrio splendidus (strain Mel32)) protein is 1-deoxy-D-xylulose-5-phosphate synthase.